A 598-amino-acid polypeptide reads, in one-letter code: MKKIRNFCIIAHIDHGKSTLADRLLGATQTVTAREEKAQLLDNMDLERERGITIKSHAIQMEYKYKGEEYILNLIDTPGHVDFSYEVSRSIAACEGALLIVDAAQSIQAQTISNLYLALENDLEIIPVLNKVDLPSANPEEVSDDIIDLLGCKLEDIIHASGKTGFGVENILAAIIEKIPPPKGDPEEPLQALIFDSVYNPFRGIEVIFRVVNGEIKKGQKIKFMATDNEYFADEIGTLKLNQVPKNVVSAGDVGYLISGIKEAREVKVGDTITDAKVPTTNMITGFEDVKPMVFAGIYPVDTEDYEDLRSSMEKLQLNDASLVFTPESSAALGFGFRCGFLGMLHMEIIQERLEREFDMTVITTVPNVSYLAYTKKEPEKALIVNNPSDLPEPSKLDRVEEPFIKATIITKADFVGNVMSLCIEKRGLITNQTYLTTERVELNFDMPLAEIVFDFYDRLKTVSKGYASFDYSPIGMRTSKLVKLDVLLNAQTVDALSALIHEDNAYNIGKKMTEKLRELIPRQQFDIPIQAAIGAKIIARETIKALRKDVTAKCYGGDISRKRKLLEKQKKGKKRMRQVGNVEIPQEAFMAVLKLND.

The tr-type G domain occupies 2–183 (KKIRNFCIIA…AIIEKIPPPK (182 aa)). GTP-binding positions include 14 to 19 (DHGKST) and 130 to 133 (NKVD).

This sequence belongs to the TRAFAC class translation factor GTPase superfamily. Classic translation factor GTPase family. LepA subfamily.

The protein localises to the cell inner membrane. It carries out the reaction GTP + H2O = GDP + phosphate + H(+). Its function is as follows. Required for accurate and efficient protein synthesis under certain stress conditions. May act as a fidelity factor of the translation reaction, by catalyzing a one-codon backward translocation of tRNAs on improperly translocated ribosomes. Back-translocation proceeds from a post-translocation (POST) complex to a pre-translocation (PRE) complex, thus giving elongation factor G a second chance to translocate the tRNAs correctly. Binds to ribosomes in a GTP-dependent manner. This chain is Elongation factor 4, found in Flavobacterium johnsoniae (strain ATCC 17061 / DSM 2064 / JCM 8514 / BCRC 14874 / CCUG 350202 / NBRC 14942 / NCIMB 11054 / UW101) (Cytophaga johnsonae).